The following is a 436-amino-acid chain: Gamma-glutamyl phosphate reductase (436 aa).

It belongs to the gamma-glutamyl phosphate reductase family.

It localises to the cytoplasm. It carries out the reaction L-glutamate 5-semialdehyde + phosphate + NADP(+) = L-glutamyl 5-phosphate + NADPH + H(+). It participates in amino-acid biosynthesis; L-proline biosynthesis; L-glutamate 5-semialdehyde from L-glutamate: step 2/2. In terms of biological role, catalyzes the NADPH-dependent reduction of L-glutamate 5-phosphate into L-glutamate 5-semialdehyde and phosphate. The product spontaneously undergoes cyclization to form 1-pyrroline-5-carboxylate. This is Gamma-glutamyl phosphate reductase from Prochlorococcus marinus (strain MIT 9515).